Reading from the N-terminus, the 229-residue chain is Non-structural protein P8 (229 aa).

2 helical membrane passes run 119–139 (IIHM…VCTL) and 162–182 (SLNP…MVCA).

It belongs to the orbivirus NS3 family. Forms homooligomers via coiled-coil motif. Interacts with host OPTN; this interaction inhibits innate immune response.

It is found in the host cell membrane. The protein localises to the host Golgi apparatus. Its function is as follows. Plays a role in the inhibition of host innate immune response. Interacts with host OPTN and thus inhibits the recruitment of TBK1 to the host Golgi apparatus. In turn, downstream partner IRF3 cannot be activated and IFN-beta production is impaired. Facilitates viral particle release either by increasing plasma membrane permeability through a viroporin-like activity or by viral budding. The polypeptide is Non-structural protein P8 (Segment-10) (Bluetongue virus 17 (isolate USA) (BTV 17)).